Reading from the N-terminus, the 584-residue chain is Chondroitin proteoglycan 1 (584 aa).

A signal peptide spans 1–17 (MTLKPVLLAFLVASAYA). O-linked (Xyl...) (chondroitin sulfate) serine glycosylation occurs at Ser-50. Chitin-binding type-2 domains follow at residues 58–115 (DTDC…QCGG), 211–268 (TKSC…ECTN), and 524–578 (VPAC…ECHQ). 2 disulfide bridges follow: Cys-91–Cys-104 and Cys-244–Cys-257. The tract at residues 267-295 (TNGSGNDEGSADETTPESSGEMPYSNGYG) is disordered. An N-linked (GlcNAc...) asparagine glycan is attached at Asn-268. A disulfide bridge connects residues Cys-554 and Cys-567.

As to expression, expressed in the germline.

Required for polar body extrusion during cytokinesis in embryo development. Affects cortical granule size. Has roles in meiotic chromosome segregation, osmotic barrier function and polarization in conjunction with cpg-2. Binds chitin. This Caenorhabditis elegans protein is Chondroitin proteoglycan 1 (cpg-1).